A 63-amino-acid chain; its full sequence is Large ribosomal subunit protein bL28 (63 aa).

Belongs to the bacterial ribosomal protein bL28 family.

This chain is Large ribosomal subunit protein bL28, found in Alkaliphilus oremlandii (strain OhILAs) (Clostridium oremlandii (strain OhILAs)).